The following is a 328-amino-acid chain: DNA repair and recombination protein RadA (328 aa).

118-125 (GEYGSGKT) is a binding site for ATP.

This sequence belongs to the eukaryotic RecA-like protein family.

Functionally, involved in DNA repair and in homologous recombination. Binds and assemble on single-stranded DNA to form a nucleoprotein filament. Hydrolyzes ATP in a ssDNA-dependent manner and promotes DNA strand exchange between homologous DNA molecules. The protein is DNA repair and recombination protein RadA of Desulfurococcus amylolyticus (strain DSM 18924 / JCM 16383 / VKM B-2413 / 1221n) (Desulfurococcus kamchatkensis).